Consider the following 256-residue polypeptide: MAFTLTNKNVIFVAGLGGIGLDTSKELVKRDLKNLVILDRIENPAAIAELKAINPKVTVTFYPYDVTVPIAETSKLLKTIFAKLTTVDVLINGAGILDDYQIERTIAVNYTGLVNTTTAILDFWDKRKGGPGGIICNIGSVTGFNAIYQVPVYSGTKAAVVNFTSSLAKLAPITGVTAYTVNPGITRTTLVHKFNSWLDVEPQVAEKLLAHPTQTSLSCAENFVKAIELNENGAIWKLDLGTLEAIQWSKHWDSGI.

12–35 (FVAGLGGIGLDTSKELVKRDLKNL) is a binding site for NAD(+). Ser-140 lines the substrate pocket. Tyr-153 acts as the Proton acceptor in catalysis.

It belongs to the short-chain dehydrogenases/reductases (SDR) family. Homodimer.

It catalyses the reaction a primary alcohol + NAD(+) = an aldehyde + NADH + H(+). The catalysed reaction is a secondary alcohol + NAD(+) = a ketone + NADH + H(+). The polypeptide is Alcohol dehydrogenase (Adh) (Drosophila erecta (Fruit fly)).